A 204-amino-acid chain; its full sequence is N-(5'-phosphoribosyl)anthranilate isomerase (204 aa).

Belongs to the TrpF family.

The catalysed reaction is N-(5-phospho-beta-D-ribosyl)anthranilate = 1-(2-carboxyphenylamino)-1-deoxy-D-ribulose 5-phosphate. It functions in the pathway amino-acid biosynthesis; L-tryptophan biosynthesis; L-tryptophan from chorismate: step 3/5. This is N-(5'-phosphoribosyl)anthranilate isomerase from Bacillus cereus (strain AH820).